The primary structure comprises 300 residues: Cation-efflux pump FieF (300 aa).

A helical transmembrane segment spans residues 24–44 (LLIKILAWWYTGSVSILAALV). 2 residues coordinate Zn(2+): aspartate 45 and aspartate 49. A run of 2 helical transmembrane segments spans residues 82–102 (AALA…LTSI) and 114–134 (PGVG…LVTF). Positions 153 and 157 each coordinate Zn(2+). The next 2 membrane-spanning stretches (helical) occupy residues 156-176 (SDVM…YGWH) and 178-198 (ADAL…LRMG).

Belongs to the cation diffusion facilitator (CDF) transporter (TC 2.A.4) family. FieF subfamily. As to quaternary structure, homodimer.

The protein localises to the cell inner membrane. The catalysed reaction is Zn(2+)(in) + H(+)(out) = Zn(2+)(out) + H(+)(in). It catalyses the reaction Cd(2+)(in) + H(+)(out) = Cd(2+)(out) + H(+)(in). It carries out the reaction Fe(2+)(in) + H(+)(out) = Fe(2+)(out) + H(+)(in). Divalent metal cation transporter which exports Zn(2+), Cd(2+) and possibly Fe(2+). May be involved in zinc and iron detoxification by efflux. This is Cation-efflux pump FieF from Salmonella agona (strain SL483).